A 1488-amino-acid polypeptide reads, in one-letter code: Neuropathy target esterase sws (1488 aa).

The Lumenal segment spans residues 1–34; the sequence is MDVLELLRASVNGCYNTLFSDAWSQYVSKQIATT. A helical transmembrane segment spans residues 35 to 55; the sequence is TYWYGALLAIGALFIAWFLYF. Residues 56 to 1488 are Cytoplasmic-facing; that stretch reads KRLASLRLRD…ENVTEADTKN (1433 aa). Residue 175 to 302 participates in a nucleoside 3',5'-cyclic phosphate binding; sequence IFGHFEKPIF…IRVIQVIMIR (128 aa). Disordered stretches follow at residues 339 to 379 and 402 to 440; these read PGPV…DPNP and QQQQ…ATIT. Low complexity-rich tracts occupy residues 344-356 and 402-413; these read SQAS…MASR and QQQQSSGVSVGG. The span at 415 to 424 shows a compositional bias: polar residues; that stretch reads HRSSGACTPT. A nucleoside 3',5'-cyclic phosphate is bound by residues 458-587 and 576-703; these read ELGL…VVRR and IVLD…LSHR. Residues 929–1095 form the PNPLA domain; that stretch reads LVLGGGGARG…VNNLPGHLWR (167 aa). The GXGXXG motif lies at 933–938; that stretch reads GGGARG. The GXSXG signature appears at 960-964; the sequence is GVSIG. The active-site Nucleophile is the Ser-962. Asp-1082 (proton acceptor) is an active-site residue. The DGA/G signature appears at 1082 to 1084; it reads DGG. Ser-1176 is subject to Phosphoserine. 2 disordered regions span residues 1348-1376 and 1398-1488; these read RKVD…QGNL and EHKR…DTKN. The segment covering 1399 to 1410 has biased composition (basic residues); that stretch reads HKRRQKSKHKRD. Over residues 1440–1452 the composition is skewed to basic and acidic residues; it reads IDAKLDQLRKLQQ. Residues 1456-1470 show a composition bias toward acidic residues; sequence QGNESEQEQEQEQEQ.

The protein belongs to the NTE family. Interacts with Pka-C3; interaction inhibits the catalytic function of Pka-C3 and the esterase activity of sws.

It is found in the endoplasmic reticulum membrane. It catalyses the reaction a 1-acyl-sn-glycero-3-phosphocholine + H2O = sn-glycerol 3-phosphocholine + a fatty acid + H(+). Its function is as follows. Phospholipase B that deacylates intracellular phosphatidylcholine (PtdCho), generating glycerophosphocholine (GroPtdCho). This deacylation occurs at both sn-2 and sn-1 positions of PtdCho. Its specific chemical modification by certain organophosphorus (OP) compounds leads to distal axonopathy. Plays a role in the signaling mechanism between neurons and glia that regulates glia wrapping during development of the adult brain. Essential for membrane lipid homeostasis and cell survival in both neurons and glia of the adult brain. The polypeptide is Neuropathy target esterase sws (Drosophila mojavensis (Fruit fly)).